The following is a 695-amino-acid chain: DNA ligase (695 aa).

NAD(+)-binding positions include 36–40 (DADYD), 85–86 (SL), and E123. K125 functions as the N6-AMP-lysine intermediate in the catalytic mechanism. Residues R146, E182, K318, and K342 each coordinate NAD(+). Zn(2+) is bound by residues C436, C439, C454, and C460. One can recognise a BRCT domain in the interval 617-695 (LQSGDLAGKT…EDGLKALLSQ (79 aa)).

This sequence belongs to the NAD-dependent DNA ligase family. LigA subfamily. Mg(2+) is required as a cofactor. Mn(2+) serves as cofactor.

The enzyme catalyses NAD(+) + (deoxyribonucleotide)n-3'-hydroxyl + 5'-phospho-(deoxyribonucleotide)m = (deoxyribonucleotide)n+m + AMP + beta-nicotinamide D-nucleotide.. In terms of biological role, DNA ligase that catalyzes the formation of phosphodiester linkages between 5'-phosphoryl and 3'-hydroxyl groups in double-stranded DNA using NAD as a coenzyme and as the energy source for the reaction. It is essential for DNA replication and repair of damaged DNA. This Bordetella avium (strain 197N) protein is DNA ligase.